We begin with the raw amino-acid sequence, 383 residues long: 8-amino-7-oxononanoate synthase (383 aa).

R27 and R34 together coordinate substrate. 114 to 115 lines the pyridoxal 5'-phosphate pocket; sequence GY. H139 provides a ligand contact to substrate. Pyridoxal 5'-phosphate contacts are provided by residues S187, 212 to 215, and 232 to 235; these read DDAH and TLSK. K235 is subject to N6-(pyridoxal phosphate)lysine. Residue T344 coordinates substrate.

The protein belongs to the class-II pyridoxal-phosphate-dependent aminotransferase family. BioF subfamily. Homodimer. The cofactor is pyridoxal 5'-phosphate.

It catalyses the reaction 6-carboxyhexanoyl-[ACP] + L-alanine + H(+) = (8S)-8-amino-7-oxononanoate + holo-[ACP] + CO2. The protein operates within cofactor biosynthesis; biotin biosynthesis. In terms of biological role, catalyzes the decarboxylative condensation of pimeloyl-[acyl-carrier protein] and L-alanine to produce 8-amino-7-oxononanoate (AON), [acyl-carrier protein], and carbon dioxide. The chain is 8-amino-7-oxononanoate synthase from Methylorubrum extorquens (strain PA1) (Methylobacterium extorquens).